The following is a 258-amino-acid chain: Calcium release-activated calcium channel protein 1 (258 aa).

At 1-63 the chain is on the cytoplasmic side; the sequence is MYPECGVETK…SRAKLKASSR (63 aa). A helical membrane pass occupies residues 64–81; sequence TSALLSGFAMVAMVEVQL. Residues 82–91 are Extracellular-facing; the sequence is EPNHAYPPGL. Residues 92–112 form a helical membrane-spanning segment; sequence LIAFSACTTVLVAVHLFALMV. Residues 113–145 lie on the Cytoplasmic side of the membrane; sequence STCILPNIEAVSNVHNLNSVKESPHERMHHHIE. Residues 146–166 form a helical membrane-spanning segment; the sequence is LAWAFSTVIGTLLFLAEVVLL. The Extracellular segment spans residues 167 to 192; sequence CWVKFLPVNSPKISSNETSAVSSGQA. The N-linked (GlcNAc...) asparagine glycan is linked to Asn182. A helical transmembrane segment spans residues 193–213; the sequence is AAITSTAIMVPFGLVFIVFAV. The Cytoplasmic segment spans residues 214 to 258; it reads HFYRSLVSHKTDRQFQELNELAELAQLQDQLDHRGDPVQSPVHYA.

It belongs to the Orai family.

The protein resides in the cell membrane. Its function is as follows. Ca(2+) release-activated Ca(2+) (CRAC) channel subunit which mediates Ca(2+) influx following depletion of intracellular Ca(2+) stores. The chain is Calcium release-activated calcium channel protein 1 (orai1) from Xenopus laevis (African clawed frog).